A 510-amino-acid chain; its full sequence is Probable allantoinase 2 (510 aa).

Zn(2+) is bound by residues histidine 97, histidine 99, lysine 185, histidine 228, histidine 287, and aspartate 360. N6-carboxylysine is present on lysine 185.

It belongs to the metallo-dependent hydrolases superfamily. Allantoinase family. As to quaternary structure, homotetramer. The cofactor is Zn(2+). Post-translationally, carboxylation allows a single lysine to coordinate two zinc ions.

The catalysed reaction is (S)-allantoin + H2O = allantoate + H(+). The protein operates within nitrogen metabolism; (S)-allantoin degradation; allantoate from (S)-allantoin: step 1/1. In Dictyostelium discoideum (Social amoeba), this protein is Probable allantoinase 2 (allB2).